The chain runs to 42 residues: Photosystem I reaction center subunit IX (42 aa).

The helical transmembrane segment at 7 to 27 (YLSVAPVLSTLWFVSLAGLLI) threads the bilayer.

The protein belongs to the PsaJ family.

Its subcellular location is the plastid. It is found in the chloroplast thylakoid membrane. May help in the organization of the PsaE and PsaF subunits. The sequence is that of Photosystem I reaction center subunit IX from Capsella bursa-pastoris (Shepherd's purse).